We begin with the raw amino-acid sequence, 278 residues long: Digeranylgeranylglyceryl phosphate synthase (278 aa).

The next 8 helical transmembrane spans lie at 17–37, 40–60, 91–111, 129–149, 153–173, 204–224, 226–246, and 257–277; these read MASF…LEMV, LIFA…LNDI, LLVF…LMAV, IIGN…GGIA, IDVT…REII, LLLV…FFGI, YLIS…PLLI, and SRNI…GSFF.

This sequence belongs to the UbiA prenyltransferase family. DGGGP synthase subfamily. Mg(2+) serves as cofactor.

The protein localises to the cell membrane. The catalysed reaction is sn-3-O-(geranylgeranyl)glycerol 1-phosphate + (2E,6E,10E)-geranylgeranyl diphosphate = 2,3-bis-O-(geranylgeranyl)-sn-glycerol 1-phosphate + diphosphate. The protein operates within membrane lipid metabolism; glycerophospholipid metabolism. Functionally, prenyltransferase that catalyzes the transfer of the geranylgeranyl moiety of geranylgeranyl diphosphate (GGPP) to the C2 hydroxyl of (S)-3-O-geranylgeranylglyceryl phosphate (GGGP). This reaction is the second ether-bond-formation step in the biosynthesis of archaeal membrane lipids. The sequence is that of Digeranylgeranylglyceryl phosphate synthase from Methanococcus maripaludis (strain C5 / ATCC BAA-1333).